A 348-amino-acid chain; its full sequence is Calcium homeostasis modulator protein 1 (348 aa).

Over 1 to 20 the chain is Cytoplasmic; sequence MDKFRMIFQFLQSNQESFMN. The tract at residues 9–36 is central pore; that stretch reads QFLQSNQESFMNGICGIMALASAQMYSA. A helical transmembrane segment spans residues 21–36; the sequence is GICGIMALASAQMYSA. At 37–48 the chain is on the extracellular side; that stretch reads FDFNCPCLPGYN. Cystine bridges form between cysteine 41/cysteine 126 and cysteine 43/cysteine 160. The chain crosses the membrane as a helical span at residues 49 to 71; that stretch reads VVYSLGILLTPPLVLFLLGLVMN. Residues 62-69 are phospholipid-binding; it reads VLFLLGLV. Topologically, residues 72-98 are cytoplasmic; it reads NNISMLAEEWKRPAGRRAKDPAVLRYM. Residues 99-124 traverse the membrane as a helical segment; sequence FCSMAQRALIAPVVWVAVTLLDGKCF. Cysteine 100 is lipidated: S-palmitoyl cysteine. The tract at residues 104 to 116 is phospholipid-binding; sequence QRALIAPVVWVAV. The Extracellular portion of the chain corresponds to 125–179; the sequence is LCAFCTAVPVATLGNGSLVPGLPAPELARLLARVPCPEIYDGNWLLAREVAVRYL. The N-linked (GlcNAc...) asparagine glycan is linked to asparagine 139. The chain crosses the membrane as a helical span at residues 180 to 205; it reads RCISQALGWSFVLLTTLLAFVVRSVR. A phospholipid-binding region spans residues 191-201; the sequence is VLLTTLLAFVV. The Cytoplasmic portion of the chain corresponds to 206 to 348; the sequence is PCFTQVAFLK…KEVATYFSKV (143 aa). Cysteine 207 carries S-palmitoyl cysteine lipidation. Positions 324-348 are disordered; the sequence is LMSNGWAGGEPRPPRKEVATYFSKV.

It belongs to the CALHM family. In terms of assembly, oligomerizes to form hexamers and octamers. Does not form gap junctions. Associates with CALHM3 as a pore-forming subunit in a hetero-hexameric channel complex. N-glycosylated. Assembly with CALHM3 is associated with N-glycan remodeling and formation of hybrid complex- and high mannose-type glycochains. This N-glycan processing regulates channel trafficking and gating kinetics. In terms of processing, palmitoylated by ZDHHC3, ZDHHC20 and possibly ZDHHC7. Palmitoylation regulates voltage-dependent gating of the channel by shifting it toward more depolarized potentials. In terms of tissue distribution, specifically expressed in type II taste bud cells (at protein level). Not expressed in brain.

It is found in the cell membrane. It localises to the endoplasmic reticulum membrane. Its subcellular location is the basolateral cell membrane. It catalyses the reaction ATP(in) = ATP(out). It carries out the reaction Ca(2+)(in) = Ca(2+)(out). The catalysed reaction is Mg(2+)(in) = Mg(2+)(out). The enzyme catalyses Na(+)(in) = Na(+)(out). It catalyses the reaction K(+)(in) = K(+)(out). It carries out the reaction Li(+)(in) = Li(+)(out). The catalysed reaction is Rb(+)(in) = Rb(+)(out). The enzyme catalyses Cs(+)(in) = Cs(+)(out). It catalyses the reaction chloride(in) = chloride(out). With respect to regulation, regulated by membrane voltage and extracellular Ca(2+). Inhibited by Gd(3+), ruthenium red, and Zn(2+) and partially inhibited by 2-aminoethoxydiphenyl borate. Pore-forming subunit of gustatory voltage-gated ion channels required for sensory perception of sweet, bitter and umami tastes. With CALHM3 forms a fast-activating voltage-gated ATP-release channel in type II taste bud cells, ATP acting as a neurotransmitter to activate afferent neural gustatory pathways. Acts both as a voltage-gated and calcium-activated ion channel: mediates neuronal excitability in response to membrane depolarization and low extracellular Ca(2+) concentration. Has poor ion selectivity and forms a wide pore (around 14 Angstroms) that mediates permeation of small ions including Ca(2+), Na(+), K(+) and Cl(-), as well as larger ions such as ATP(4-). Mediates Ca(2+) influx and downstream activation of the ERK1 and ERK2 cascade in neurons. Triggers endoplasmic reticulum stress by reducing the calcium content of the endoplasmic reticulum. May indirectly control amyloid precursor protein (APP) proteolysis and aggregated amyloid-beta (Abeta) peptides levels in a Ca(2+) dependent manner. The polypeptide is Calcium homeostasis modulator protein 1 (Mus musculus (Mouse)).